Reading from the N-terminus, the 146-residue chain is UPF0306 protein CKO_04548 (146 aa).

This sequence belongs to the UPF0306 family.

This is UPF0306 protein CKO_04548 from Citrobacter koseri (strain ATCC BAA-895 / CDC 4225-83 / SGSC4696).